The sequence spans 423 residues: D-tagatose-1,6-bisphosphate aldolase subunit GatZ (423 aa).

The protein belongs to the GatZ/KbaZ family. GatZ subfamily. In terms of assembly, forms a complex with GatY.

It functions in the pathway carbohydrate metabolism; D-tagatose 6-phosphate degradation; D-glyceraldehyde 3-phosphate and glycerone phosphate from D-tagatose 6-phosphate: step 2/2. Its function is as follows. Component of the tagatose-1,6-bisphosphate aldolase GatYZ that is required for full activity and stability of the Y subunit. Could have a chaperone-like function for the proper and stable folding of GatY. When expressed alone, GatZ does not show any aldolase activity. Is involved in the catabolism of galactitol. The chain is D-tagatose-1,6-bisphosphate aldolase subunit GatZ from Salmonella heidelberg (strain SL476).